The chain runs to 239 residues: Large ribosomal subunit protein uL1 (239 aa).

This sequence belongs to the universal ribosomal protein uL1 family. In terms of assembly, part of the 50S ribosomal subunit.

Its function is as follows. Binds directly to 23S rRNA. The L1 stalk is quite mobile in the ribosome, and is involved in E site tRNA release. Functionally, protein L1 is also a translational repressor protein, it controls the translation of the L11 operon by binding to its mRNA. The sequence is that of Large ribosomal subunit protein uL1 from Mycolicibacterium gilvum (strain PYR-GCK) (Mycobacterium gilvum (strain PYR-GCK)).